The sequence spans 160 residues: 6,7-dimethyl-8-ribityllumazine synthase (160 aa).

5-amino-6-(D-ribitylamino)uracil contacts are provided by residues Trp28, 59-61 (SFE), and 82-84 (VII). A (2S)-2-hydroxy-3-oxobutyl phosphate-binding site is contributed by 87 to 88 (GT). Residue His90 is the Proton donor of the active site. Residue Phe115 coordinates 5-amino-6-(D-ribitylamino)uracil. (2S)-2-hydroxy-3-oxobutyl phosphate is bound at residue Arg129.

Belongs to the DMRL synthase family.

It catalyses the reaction (2S)-2-hydroxy-3-oxobutyl phosphate + 5-amino-6-(D-ribitylamino)uracil = 6,7-dimethyl-8-(1-D-ribityl)lumazine + phosphate + 2 H2O + H(+). Its pathway is cofactor biosynthesis; riboflavin biosynthesis; riboflavin from 2-hydroxy-3-oxobutyl phosphate and 5-amino-6-(D-ribitylamino)uracil: step 1/2. Its function is as follows. Catalyzes the formation of 6,7-dimethyl-8-ribityllumazine by condensation of 5-amino-6-(D-ribitylamino)uracil with 3,4-dihydroxy-2-butanone 4-phosphate. This is the penultimate step in the biosynthesis of riboflavin. In Clavibacter michiganensis subsp. michiganensis (strain NCPPB 382), this protein is 6,7-dimethyl-8-ribityllumazine synthase.